The sequence spans 249 residues: Thioesterase TesA (249 aa).

Active-site residues include serine 92, aspartate 196, and histidine 224.

It belongs to the thioesterase family.

The enzyme catalyses a fatty acyl-CoA + H2O = a fatty acid + CoA + H(+). In terms of biological role, involved in the synthesis of both phthiocerol dimycocerosates (PDIMs) and phenolic glycolipids (PGLs), which are structurally related lipids non-covalently bound to the outer cell wall layer of M.tuberculosis and are important virulence factors. In Mycobacterium marinum (strain ATCC BAA-535 / M), this protein is Thioesterase TesA.